The following is a 333-amino-acid chain: Phenylalanine--tRNA ligase alpha subunit (333 aa).

Glu-248 is a Mg(2+) binding site.

The protein belongs to the class-II aminoacyl-tRNA synthetase family. Phe-tRNA synthetase alpha subunit type 1 subfamily. In terms of assembly, tetramer of two alpha and two beta subunits. The cofactor is Mg(2+).

The protein localises to the cytoplasm. It carries out the reaction tRNA(Phe) + L-phenylalanine + ATP = L-phenylalanyl-tRNA(Phe) + AMP + diphosphate + H(+). The sequence is that of Phenylalanine--tRNA ligase alpha subunit from Ureaplasma urealyticum serovar 10 (strain ATCC 33699 / Western).